Reading from the N-terminus, the 98-residue chain is Integration host factor subunit beta (98 aa).

The disordered stretch occupies residues 59-98 (RTGRNPKTGESVTLPGKYVPHFKPGKEMRDRVNESIQSEG). A compositionally biased stretch (basic and acidic residues) spans 82–91 (PGKEMRDRVN).

It belongs to the bacterial histone-like protein family. As to quaternary structure, heterodimer of an alpha and a beta chain.

Its function is as follows. This protein is one of the two subunits of integration host factor, a specific DNA-binding protein that functions in genetic recombination as well as in transcriptional and translational control. This chain is Integration host factor subunit beta, found in Saccharophagus degradans (strain 2-40 / ATCC 43961 / DSM 17024).